The primary structure comprises 144 residues: Ribosome-binding factor A (144 aa).

A disordered region spans residues 120–144 (DKRRMAEAGREEDEAAPDDTTEDKA). Residues 129–144 (REEDEAAPDDTTEDKA) are compositionally biased toward acidic residues.

It belongs to the RbfA family. As to quaternary structure, monomer. Binds 30S ribosomal subunits, but not 50S ribosomal subunits or 70S ribosomes.

The protein resides in the cytoplasm. In terms of biological role, one of several proteins that assist in the late maturation steps of the functional core of the 30S ribosomal subunit. Associates with free 30S ribosomal subunits (but not with 30S subunits that are part of 70S ribosomes or polysomes). Required for efficient processing of 16S rRNA. May interact with the 5'-terminal helix region of 16S rRNA. This chain is Ribosome-binding factor A, found in Aeromonas salmonicida (strain A449).